Reading from the N-terminus, the 149-residue chain is Nucleoside diphosphate kinase (149 aa).

ATP contacts are provided by lysine 9, phenylalanine 57, arginine 85, threonine 91, arginine 102, and asparagine 112. Residue histidine 115 is the Pros-phosphohistidine intermediate of the active site.

It belongs to the NDK family. In terms of assembly, homotetramer. The cofactor is Mg(2+).

The protein resides in the cytoplasm. The catalysed reaction is a 2'-deoxyribonucleoside 5'-diphosphate + ATP = a 2'-deoxyribonucleoside 5'-triphosphate + ADP. It carries out the reaction a ribonucleoside 5'-diphosphate + ATP = a ribonucleoside 5'-triphosphate + ADP. Major role in the synthesis of nucleoside triphosphates other than ATP. The ATP gamma phosphate is transferred to the NDP beta phosphate via a ping-pong mechanism, using a phosphorylated active-site intermediate. The polypeptide is Nucleoside diphosphate kinase (Staphylococcus saprophyticus subsp. saprophyticus (strain ATCC 15305 / DSM 20229 / NCIMB 8711 / NCTC 7292 / S-41)).